Reading from the N-terminus, the 595-residue chain is Beta-(1--&gt;2)glucan export ATP-binding/permease protein NdvA (595 aa).

The next 5 membrane-spanning stretches (helical) occupy residues F21 to L41, L56 to V76, I129 to P149, L158 to Q178, and I252 to V272. The ABC transmembrane type-1 domain maps to F21–S301. One can recognise an ABC transporter domain in the interval I335 to A569. G368 to T375 provides a ligand contact to ATP.

It belongs to the ABC transporter superfamily. Beta-(1--&gt;2)glucan exporter (TC 3.A.1.108.1) family. As to quaternary structure, homodimer.

The protein localises to the cell inner membrane. The catalysed reaction is [(1-&gt;2)-beta-D-glucosyl](n)(in) + ATP + H2O = [(1-&gt;2)-beta-D-glucosyl](n)(out) + ADP + phosphate + H(+). In terms of biological role, involved in beta-(1--&gt;2)glucan export. Transmembrane domains (TMD) form a pore in the inner membrane and the ATP-binding domain (NBD) is responsible for energy generation. The protein is Beta-(1--&gt;2)glucan export ATP-binding/permease protein NdvA of Bartonella bacilliformis (strain ATCC 35685 / KC583 / Herrer 020/F12,63).